A 298-amino-acid chain; its full sequence is Lipoyl synthase 1 (298 aa).

Residues cysteine 34, cysteine 39, cysteine 45, cysteine 60, cysteine 64, cysteine 67, and serine 274 each coordinate [4Fe-4S] cluster. In terms of domain architecture, Radical SAM core spans 46–263; that stretch reads FYQGTATFLM…RRLGESMGFL (218 aa).

It belongs to the radical SAM superfamily. Lipoyl synthase family. The cofactor is [4Fe-4S] cluster.

The protein localises to the cytoplasm. The enzyme catalyses [[Fe-S] cluster scaffold protein carrying a second [4Fe-4S](2+) cluster] + N(6)-octanoyl-L-lysyl-[protein] + 2 oxidized [2Fe-2S]-[ferredoxin] + 2 S-adenosyl-L-methionine + 4 H(+) = [[Fe-S] cluster scaffold protein] + N(6)-[(R)-dihydrolipoyl]-L-lysyl-[protein] + 4 Fe(3+) + 2 hydrogen sulfide + 2 5'-deoxyadenosine + 2 L-methionine + 2 reduced [2Fe-2S]-[ferredoxin]. It participates in protein modification; protein lipoylation via endogenous pathway; protein N(6)-(lipoyl)lysine from octanoyl-[acyl-carrier-protein]: step 2/2. Functionally, catalyzes the radical-mediated insertion of two sulfur atoms into the C-6 and C-8 positions of the octanoyl moiety bound to the lipoyl domains of lipoate-dependent enzymes, thereby converting the octanoylated domains into lipoylated derivatives. This chain is Lipoyl synthase 1, found in Thermosynechococcus vestitus (strain NIES-2133 / IAM M-273 / BP-1).